A 142-amino-acid polypeptide reads, in one-letter code: Hemoglobin subunit alpha (142 aa).

At serine 1 the chain carries N-acetylserine. Residues 1–142 form the Globin domain; it reads SLSDKDKAAV…VALALAERYR (142 aa). An O2-binding site is contributed by histidine 59. Histidine 88 is a binding site for heme b.

This sequence belongs to the globin family. In terms of assembly, heterotetramer of two alpha chains and two beta chains. In terms of tissue distribution, red blood cells.

In terms of biological role, involved in oxygen transport from gills to the various peripheral tissues. This chain is Hemoglobin subunit alpha (hba), found in Gymnodraco acuticeps (Antarctic dragonfish).